Consider the following 590-residue polypeptide: Glutamine--fructose-6-phosphate aminotransferase [isomerizing] (590 aa).

Cys-2 acts as the Nucleophile; for GATase activity in catalysis. The region spanning 2-219 is the Glutamine amidotransferase type-2 domain; sequence CGIVACILKD…DGEMVILDGD (218 aa). 2 SIS domains span residues 277-415 and 438-580; these read VVEE…PELM and LAAT…PDKP. Lys-585 acts as the For Fru-6P isomerization activity in catalysis.

As to quaternary structure, homodimer.

The protein localises to the cytoplasm. The enzyme catalyses D-fructose 6-phosphate + L-glutamine = D-glucosamine 6-phosphate + L-glutamate. Catalyzes the first step in hexosamine metabolism, converting fructose-6P into glucosamine-6P using glutamine as a nitrogen source. This is Glutamine--fructose-6-phosphate aminotransferase [isomerizing] from Methanothermobacter thermautotrophicus (strain ATCC 29096 / DSM 1053 / JCM 10044 / NBRC 100330 / Delta H) (Methanobacterium thermoautotrophicum).